The sequence spans 336 residues: Fructose-1,6-bisphosphatase class 1 (336 aa).

Residues E90, D112, L114, and D115 each coordinate Mg(2+). Residues 115 to 118, N207, and K273 each bind substrate; that span reads DGSS. Mg(2+) is bound at residue E279.

The protein belongs to the FBPase class 1 family. Homotetramer. Requires Mg(2+) as cofactor.

The protein localises to the cytoplasm. The enzyme catalyses beta-D-fructose 1,6-bisphosphate + H2O = beta-D-fructose 6-phosphate + phosphate. Its pathway is carbohydrate biosynthesis; gluconeogenesis. This chain is Fructose-1,6-bisphosphatase class 1, found in Xanthomonas oryzae pv. oryzae (strain PXO99A).